A 397-amino-acid chain; its full sequence is Enoyl-[acyl-carrier-protein] reductase [NADH] (397 aa).

NAD(+)-binding positions include 47 to 52, 73 to 74, 110 to 111, and 138 to 139; these read GASTGY, LE, DA, and LA. Tyr224 contributes to the substrate binding site. Tyr234 acts as the Proton donor in catalysis. Residues Lys243 and 272 to 274 each bind NAD(+); that span reads LVT.

The protein belongs to the TER reductase family. In terms of assembly, monomer.

It catalyses the reaction a 2,3-saturated acyl-[ACP] + NAD(+) = a (2E)-enoyl-[ACP] + NADH + H(+). The protein operates within lipid metabolism; fatty acid biosynthesis. Involved in the final reduction of the elongation cycle of fatty acid synthesis (FAS II). Catalyzes the reduction of a carbon-carbon double bond in an enoyl moiety that is covalently linked to an acyl carrier protein (ACP). This Methylobacillus flagellatus (strain ATCC 51484 / DSM 6875 / VKM B-1610 / KT) protein is Enoyl-[acyl-carrier-protein] reductase [NADH].